The following is a 1331-amino-acid chain: MRLKTKIRKKWLSVLCTVVFLLNILFIANVTILPKVGAATSNDGVVKIDTSTLIGTNHAHCWYRDRLDTALRGIRSWGMNSVRVVLSNGYRWTKIPASEVANIISLSRSLGFKAIILEVHDTTGYGEDGAACSLAQAVEYWKEIKSVLDGNEDFVIINIGNEPYGNNNYQNWVNDTKNAIKALRDAGFKHTIMVDAPNWGQDWSNTMRDNAQSIMEADPLRNLVFSIHMYGVYNTASKVEEYIKSFVDKGLPLVIGEFGHQHTDGDPDEEAIVRYAKQYKIGLFSWSWCGNSSYVGYLDMVNNWDPNNPTPWGQWYKTNAIGTSSTPTPTSTVTPTPTPTPTPTPTVTATPTPTPTPVSTPATSGQIKVLYANKETNSTTNTIRPWLKVVNSGSSSIDLSRVTIRYWYTVDGERAQSAISDWAQIGASNVTFKFVKLSSSVSGADYYLEIGFKSGAGQLQPGKDTGEIQMRFNKDDWSNYNQGNDWSWIQSMTSYGENEKVTAYIDGVLVWGQEPSGATPAPAPTATPTPTPTVTPTPTVTPTPTVTATPTPTPTPTPTPVSTPATGGQIKVLYANKETNSTTNTIRPWLKVVNSGSSSIDLSRVTIRYWYTVDGERAQSAISDWAQIGASNVTFKFVKLSSSVSGADYYLEIGFKSGAGQLQPGKDTGEIQIRFNKSDWSNYNQGNDWSWIQSMTSYGENEKVTAYIDGVLVWGQEPSGTTPSPTSTPTVTVTPTPTPTPTPTPTPTVTPTPTVTPTPTVTATPTPTPTPIPTVTPLPTISPSPSVVEITINTNAGRTQISPYIYGANQDIEGVVHSARRLGGNRLTGYNWENNFSNAGNDWYHSSDDYLCWSMGISGEDAKVPAAVVSKFHEYSLKNNAYSAVTLQMAGYVSKDNYGTVSENETAPSNRWAEVKFKKDAPLSLNPDLNDNFVYMDEFINYLINKYGMASSPTGIKGYILDNEPDLWASTHPRIHPNKVTCKELIEKSVELAKVIKTLDPSAEVFGYASYGFMGYYSLQDAPDWNQVKGEHRWFISWYLEQMKKASDSFGKRLLDVLDLHWYPEARGGNIRVCFDGENDTSKEVVIARMQAPRTLWDPTYKTSVKGQITAGENSWINQWFSDYLPIIPNVKADIEKYYPGTKLAISEFDYGGRNHISGGIALADVLGIFGKYGVNFAARWGDSGSYAAAAYNIYLNYDGKGSKYGNTNVSANTSDVENMPVYASINGQDDSELHIILINRNYDQKLQVKINITSTPKYTKAEIYGFDSNSPEYKKMGNIDNIESNVFTLEVPKFNGVSHSITLDFNVSIKIIQNEVIKFIRNLVFMRALV.

Residues 1–41 (MRLKTKIRKKWLSVLCTVVFLLNILFIANVTILPKVGAATS) form the signal peptide. Residues 42–325 (NDGVVKIDTS…YKTNAIGTSS (284 aa)) form a catalytic (mannanase) region. The Proton donor role is filled by Glu-162. Residue Glu-257 is the Nucleophile of the active site. 3 disordered regions span residues 319–363 (NAIG…TPAT), 515–566 (PSGA…TPAT), and 717–780 (EPSG…PLPT). A compositionally biased stretch (low complexity) spans 323–335 (TSSTPTPTSTVTP). The CBM3 1 domain occupies 363 to 516 (TSGQIKVLYA…GVLVWGQEPS (154 aa)). 2 stretches are compositionally biased toward pro residues: residues 521 to 541 (APAP…PTVT) and 551 to 561 (TPTPTPTPTPV). Residues 566 to 719 (TGGQIKVLYA…GVLVWGQEPS (154 aa)) form the CBM3 2 domain. Residues 721 to 735 (TTPSPTSTPTVTVTP) show a composition bias toward low complexity. Composition is skewed to pro residues over residues 736-756 (TPTP…PTVT) and 766-780 (TPTP…PLPT). The segment at 781–1331 (ISPSPSVVEI…RNLVFMRALV (551 aa)) is catalytic (endoglucanase).

In the N-terminal section; belongs to the glycosyl hydrolase 5 (cellulase A) family. This sequence in the C-terminal section; belongs to the glycosyl hydrolase 44 (cellulase J) family.

It carries out the reaction Random hydrolysis of (1-&gt;4)-beta-D-mannosidic linkages in mannans, galactomannans and glucomannans.. It catalyses the reaction Endohydrolysis of (1-&gt;4)-beta-D-glucosidic linkages in cellulose, lichenin and cereal beta-D-glucans.. Functionally, degradation of hemicelluloses, the second most abundant polysaccharides in nature. Contains two catalytic domains with mannanase and endoglucanase activities. This chain is Beta-mannanase/endoglucanase A (manA), found in Caldicellulosiruptor saccharolyticus (Caldocellum saccharolyticum).